The chain runs to 756 residues: Serine/threonine-protein kinase DCLK1 (756 aa).

S32 and S36 each carry phosphoserine. T46 carries the post-translational modification Phosphothreonine. Doublecortin domains lie at 57 to 143 (KKVR…LEYT) and 186 to 269 (KLVT…QDDF). Residues 288-393 (ASASRRGTTK…QRGWRREESE (106 aa)) form a disordered region. Residues 297–313 (KSPGPSRRSKSPASTSS) show a composition bias toward low complexity. 13 positions are modified to phosphoserine: S305, S307, S330, S332, S334, S337, S347, S352, S353, S355, S358, C362, and S364. A compositionally biased stretch (low complexity) spans 347–364 (SQHGGSSTSLSSTKVCSS). The segment covering 366–375 (DENDGPGEGD) has biased composition (acidic residues). S392 is subject to Phosphoserine. The region spanning 406–663 (YKVGRTIGDG…AVQVLEHPWV (258 aa)) is the Protein kinase domain. Residues 412–420 (IGDGNFAVV) and K435 contribute to the ATP site. D527 serves as the catalytic Proton acceptor. Phosphotyrosine is present on Y536. Basic and acidic residues predominate over residues 711–723 (QVFRRRRNQDVRS). Positions 711–756 (QVFRRRRNQDVRSRYKAQPAPPELNSESEDYSPSSSETVRSPNSPF) are disordered. Phosphoserine is present on residues S742, S751, and S754.

Belongs to the protein kinase superfamily. CAMK Ser/Thr protein kinase family. CaMK subfamily.

The enzyme catalyses L-seryl-[protein] + ATP = O-phospho-L-seryl-[protein] + ADP + H(+). It carries out the reaction L-threonyl-[protein] + ATP = O-phospho-L-threonyl-[protein] + ADP + H(+). In terms of biological role, probable kinase that may be involved in a calcium-signaling pathway controlling neuronal migration in the developing brain. May also participate in functions of the mature nervous system. This Mus musculus (Mouse) protein is Serine/threonine-protein kinase DCLK1 (Dclk1).